Here is a 92-residue protein sequence, read N- to C-terminus: Small ribosomal subunit protein uS19 (92 aa).

It belongs to the universal ribosomal protein uS19 family.

In terms of biological role, protein S19 forms a complex with S13 that binds strongly to the 16S ribosomal RNA. The sequence is that of Small ribosomal subunit protein uS19 from Oceanobacillus iheyensis (strain DSM 14371 / CIP 107618 / JCM 11309 / KCTC 3954 / HTE831).